Consider the following 217-residue polypeptide: Superoxide dismutase [Cu-Zn], chloroplastic (217 aa).

Residues 1-63 constitute a chloroplast transit peptide; that stretch reads MAAHSIFTTT…TTPKPLTVFA (63 aa). Cu cation-binding residues include His109, His111, and His126. Cys120 and Cys209 are disulfide-bonded. Zn(2+) contacts are provided by His126, His134, His143, and Asp146. Residue His183 participates in Cu cation binding.

It belongs to the Cu-Zn superoxide dismutase family. As to quaternary structure, homotetramer. Requires Cu cation as cofactor. Zn(2+) serves as cofactor.

The protein resides in the plastid. It localises to the chloroplast. It carries out the reaction 2 superoxide + 2 H(+) = H2O2 + O2. Its function is as follows. Destroys radicals which are normally produced within the cells and which are toxic to biological systems. The protein is Superoxide dismutase [Cu-Zn], chloroplastic (SODCP.2) of Solanum lycopersicum (Tomato).